Here is a 211-residue protein sequence, read N- to C-terminus: Pyrrolidone-carboxylate peptidase 1 (211 aa).

Residues E79, C142, and H164 contribute to the active site.

This sequence belongs to the peptidase C15 family. Homotetramer.

The protein resides in the cytoplasm. It carries out the reaction Release of an N-terminal pyroglutamyl group from a polypeptide, the second amino acid generally not being Pro.. In terms of biological role, removes 5-oxoproline from various penultimate amino acid residues except L-proline. The protein is Pyrrolidone-carboxylate peptidase 1 (pcp1) of Saccharolobus solfataricus (strain ATCC 35092 / DSM 1617 / JCM 11322 / P2) (Sulfolobus solfataricus).